The following is a 236-amino-acid chain: Small ribosomal subunit protein uS2c (236 aa).

Belongs to the universal ribosomal protein uS2 family.

It localises to the plastid. Its subcellular location is the chloroplast. The protein is Small ribosomal subunit protein uS2c (rps2) of Ipomoea purpurea (Common morning glory).